The primary structure comprises 101 residues: Small ribosomal subunit protein uS14 (101 aa).

This sequence belongs to the universal ribosomal protein uS14 family. As to quaternary structure, part of the 30S ribosomal subunit. Contacts proteins S3 and S10.

In terms of biological role, binds 16S rRNA, required for the assembly of 30S particles and may also be responsible for determining the conformation of the 16S rRNA at the A site. In Neorickettsia sennetsu (strain ATCC VR-367 / Miyayama) (Ehrlichia sennetsu), this protein is Small ribosomal subunit protein uS14.